Here is a 361-residue protein sequence, read N- to C-terminus: Beta-hexosaminidase (361 aa).

Substrate is bound by residues Asp69, Arg77, Arg144, and Lys174–His175. The active-site Proton donor/acceptor is the His187. Asp258 functions as the Nucleophile in the catalytic mechanism.

Belongs to the glycosyl hydrolase 3 family. NagZ subfamily.

It is found in the cytoplasm. It catalyses the reaction Hydrolysis of terminal non-reducing N-acetyl-D-hexosamine residues in N-acetyl-beta-D-hexosaminides.. It participates in cell wall biogenesis; peptidoglycan recycling. Plays a role in peptidoglycan recycling by cleaving the terminal beta-1,4-linked N-acetylglucosamine (GlcNAc) from peptide-linked peptidoglycan fragments, giving rise to free GlcNAc, anhydro-N-acetylmuramic acid and anhydro-N-acetylmuramic acid-linked peptides. This is Beta-hexosaminidase from Neisseria meningitidis serogroup B (strain ATCC BAA-335 / MC58).